Reading from the N-terminus, the 67-residue chain is DNA-directed RNA polymerase subunit omega (67 aa).

The protein belongs to the RNA polymerase subunit omega family. As to quaternary structure, the RNAP catalytic core consists of 2 alpha, 1 beta, 1 beta' and 1 omega subunit. When a sigma factor is associated with the core the holoenzyme is formed, which can initiate transcription.

The catalysed reaction is RNA(n) + a ribonucleoside 5'-triphosphate = RNA(n+1) + diphosphate. Promotes RNA polymerase assembly. Latches the N- and C-terminal regions of the beta' subunit thereby facilitating its interaction with the beta and alpha subunits. This Burkholderia ambifaria (strain MC40-6) protein is DNA-directed RNA polymerase subunit omega.